We begin with the raw amino-acid sequence, 133 residues long: Ribonuclease P protein component (133 aa).

This sequence belongs to the RnpA family. In terms of assembly, consists of a catalytic RNA component (M1 or rnpB) and a protein subunit.

It catalyses the reaction Endonucleolytic cleavage of RNA, removing 5'-extranucleotides from tRNA precursor.. Its function is as follows. RNaseP catalyzes the removal of the 5'-leader sequence from pre-tRNA to produce the mature 5'-terminus. It can also cleave other RNA substrates such as 4.5S RNA. The protein component plays an auxiliary but essential role in vivo by binding to the 5'-leader sequence and broadening the substrate specificity of the ribozyme. This Pseudomonas fluorescens (strain Pf0-1) protein is Ribonuclease P protein component.